The following is a 50-amino-acid chain: Sperm protamine P1 (50 aa).

This sequence belongs to the protamine P1 family. Testis.

The protein localises to the nucleus. It localises to the chromosome. Its function is as follows. Protamines substitute for histones in the chromatin of sperm during the haploid phase of spermatogenesis. They compact sperm DNA into a highly condensed, stable and inactive complex. This chain is Sperm protamine P1 (PRM1), found in Trachypithecus phayrei (Phayre's leaf monkey).